Reading from the N-terminus, the 622-residue chain is Meiotic expression up-regulated protein 25 (622 aa).

The sequence is that of Meiotic expression up-regulated protein 25 (meu25) from Schizosaccharomyces pombe (strain 972 / ATCC 24843) (Fission yeast).